Reading from the N-terminus, the 429-residue chain is Glutamate-1-semialdehyde 2,1-aminomutase 2 (429 aa).

Lys268 carries the post-translational modification N6-(pyridoxal phosphate)lysine.

The protein belongs to the class-III pyridoxal-phosphate-dependent aminotransferase family. HemL subfamily. As to quaternary structure, homodimer. It depends on pyridoxal 5'-phosphate as a cofactor.

The protein localises to the cytoplasm. The enzyme catalyses (S)-4-amino-5-oxopentanoate = 5-aminolevulinate. It participates in porphyrin-containing compound metabolism; protoporphyrin-IX biosynthesis; 5-aminolevulinate from L-glutamyl-tRNA(Glu): step 2/2. The chain is Glutamate-1-semialdehyde 2,1-aminomutase 2 from Staphylococcus aureus (strain USA300).